A 493-amino-acid polypeptide reads, in one-letter code: Sodium-coupled neutral amino acid symporter 2 (493 aa).

At 1 to 72 (MNNAEVLNVA…LPGTTSFGMS (72 aa)) the chain is on the cytoplasmic side. Residues 1–92 (MNNAEVLNVA…SGILGLSYAM (92 aa)) form a regulates protein turnover upon amino acid deprivation region. The chain crosses the membrane as a helical span at residues 73–92 (VFNLSNAIVGSGILGLSYAM). A Na(+)-binding site is contributed by N78. The Extracellular portion of the chain corresponds to 93 to 98 (ANTGIA). Residues 99-119 (LFMILLVFVTVFSLYSIHLLL) traverse the membrane as a helical segment. Residues 120-154 (KTANEGGSLLYEQLGLKAFGIPGKLAASGSVTLQN) lie on the Cytoplasmic side of the membrane. Residues 155–173 (IGAMSSYLYIVKYELPLVI) traverse the membrane as a helical segment. Residues 174-184 (KALMDIKESNG) are Extracellular-facing. The chain crosses the membrane as a helical span at residues 185-205 (EWYLNGDYLVIMVSLAIILPL). Residues 206–213 (SLLRNLGY) are Cytoplasmic-facing. Residues 214-234 (LGYTSGFSPLCMVFFLIVVIY) form a helical membrane-spanning segment. At 235–279 (KKFEIPCPLEAMNMTSNSSSHDHMAHNETDDEMCKPKYFVFNSQT) the chain is on the extracellular side. C241 and C268 form a disulfide bridge. N-linked (GlcNAc...) asparagine glycans are attached at residues N247, N251, and N261. The helical transmembrane segment at 280–300 (VYAVPILTFSFVCHPAVLPIY) threads the bilayer. Residues 301 to 316 (QELKGRSRRRMMNVSN) are Cytoplasmic-facing. Residues 317-337 (VSFFAMFIMYLLAALFGYLTF) form a helical membrane-spanning segment. At 338 to 358 (YSKVEPELLHTYSKVFGAGVI) the chain is on the extracellular side. A helical transmembrane segment spans residues 359-379 (FVVVRLAVLMAVTLTVPIVIF). T373 provides a ligand contact to Na(+). The Cytoplasmic segment spans residues 380–400 (PIRSSLNELFCSGKDFAWIRH). The helical transmembrane segment at 401–421 (ILITFLILAFTNVLVIFVPTI) threads the bilayer. Residues 422 to 423 (RD) are Extracellular-facing. A helical membrane pass occupies residues 424–444 (IFGFIGASAAAMLVFILPSAF). Topologically, residues 445 to 459 (YIRLVKKESMKSVQK) are cytoplasmic. The chain crosses the membrane as a helical span at residues 460–482 (IGALLFLIGGIIVMIGSMTLIIL). Topologically, residues 483–493 (DWIHNSTSGGN) are extracellular.

This sequence belongs to the amino acid/polyamine transporter 2 family.

It localises to the cell membrane. It carries out the reaction L-alanine(in) + Na(+)(in) = L-alanine(out) + Na(+)(out). The catalysed reaction is glycine(in) + Na(+)(in) = glycine(out) + Na(+)(out). The enzyme catalyses L-serine(in) + Na(+)(in) = L-serine(out) + Na(+)(out). It catalyses the reaction L-proline(in) + Na(+)(in) = L-proline(out) + Na(+)(out). It carries out the reaction L-methionine(in) + Na(+)(in) = L-methionine(out) + Na(+)(out). The catalysed reaction is L-histidine(in) + Na(+)(in) = L-histidine(out) + Na(+)(out). The enzyme catalyses L-asparagine(in) + Na(+)(in) = L-asparagine(out) + Na(+)(out). It catalyses the reaction L-glutamine(in) + Na(+)(in) = L-glutamine(out) + Na(+)(out). It carries out the reaction L-threonine(in) + Na(+)(in) = L-threonine(out) + Na(+)(out). The catalysed reaction is L-leucine(in) + Na(+)(in) = L-leucine(out) + Na(+)(out). The enzyme catalyses L-phenylalanine(in) + Na(+)(in) = L-phenylalanine(out) + Na(+)(out). Its activity is regulated as follows. Inhibited by N-methyl-D-glucamine. Inhibited by choline. Allosteric regulation of sodium ions binding by pH. Symporter that cotransports neutral amino acids and sodium ions from the extracellular to the intracellular side of the cell membrane. The transport is pH-sensitive, Li(+)-intolerant, electrogenic, driven by the Na(+) electrochemical gradient and cotransports of neutral amino acids and sodium ions with a stoichiometry of 1:1. This Xenopus tropicalis (Western clawed frog) protein is Sodium-coupled neutral amino acid symporter 2.